The following is a 30-amino-acid chain: V-type proton ATPase catalytic subunit A isoform 2 (30 aa).

This sequence belongs to the ATPase alpha/beta chains family. In terms of assembly, V-ATPase is a heteromultimeric enzyme composed of a peripheral catalytic V1 complex (main components: subunits A, B, C, D, E, and F) attached to an integral membrane V0 proton pore complex (main component: the proteolipid protein).

It carries out the reaction ATP + H2O + 4 H(+)(in) = ADP + phosphate + 5 H(+)(out). Catalytic subunit of the peripheral V1 complex of vacuolar ATPase. V-ATPase vacuolar ATPase is responsible for acidifying a variety of intracellular compartments in eukaryotic cells. The sequence is that of V-type proton ATPase catalytic subunit A isoform 2 from Equisetum arvense (Field horsetail).